A 460-amino-acid chain; its full sequence is Tubby-related protein 3 (460 aa).

Disordered stretches follow at residues 37–132 and 151–193; these read KKQR…ETAP and YDEE…GVTA. The span at 151-162 shows a compositional bias: acidic residues; that stretch reads YDEEPDKEEDEG. Residues 166–188 show a composition bias toward low complexity; the sequence is SSPSARSEESAAASQKAASETGA.

This sequence belongs to the TUB family. Associates with the IFT complex A (IFT-A). Interacts with SIRT1. In terms of tissue distribution, widely expressed including eyes and adipose depots.

It is found in the nucleus. The protein resides in the cell membrane. Its subcellular location is the cell projection. The protein localises to the cilium. It localises to the cytoplasm. It is found in the secreted. In terms of biological role, negative regulator of the Shh signaling transduction pathway: recruited to primary cilia via association with the IFT complex A (IFT-A) and is required for recruitment of G protein-coupled receptor GPR161 to cilia, a promoter of PKA-dependent basal repression machinery in Shh signaling. Binds to phosphorylated inositide (phosphoinositide) lipids. Both IFT-A- and phosphoinositide-binding properties are required to regulate ciliary G protein-coupled receptor trafficking. During adipogenesis, regulates ciliary trafficking of FFAR4 in preadipocytes. The protein is Tubby-related protein 3 of Mus musculus (Mouse).